Consider the following 129-residue polypeptide: Follitropin subunit beta (129 aa).

The signal sequence occupies residues 1-18; it reads MKSVQLCLLLWCWRAICC. 6 disulfide bridges follow: Cys21–Cys69, Cys35–Cys84, Cys38–Cys122, Cys46–Cys100, Cys50–Cys102, and Cys105–Cys112. N-linked (GlcNAc...) asparagine glycans are attached at residues Asn25 and Asn42.

Belongs to the glycoprotein hormones subunit beta family. Heterodimer. The active follitropin is a heterodimer composed of an alpha chain/CGA shared with other hormones and a unique beta chain/FSHB shown here.

It localises to the secreted. Functionally, together with the alpha chain CGA constitutes follitropin, the follicle-stimulating hormone, and provides its biological specificity to the hormone heterodimer. Binds FSHR, a G protein-coupled receptor, on target cells to activate downstream signaling pathways. Follitropin is involved in follicle development and spermatogenesis in reproductive organs. The polypeptide is Follitropin subunit beta (FSHB) (Meriones unguiculatus (Mongolian jird)).